Reading from the N-terminus, the 448-residue chain is N-succinylarginine dihydrolase (448 aa).

Substrate contacts are provided by residues 19–28, asparagine 110, and 137–138; these read GGLSYGNVAS and HR. The active site involves glutamate 174. Arginine 214 is a binding site for substrate. Histidine 250 is a catalytic residue. Substrate is bound by residues aspartate 252 and asparagine 365. Residue cysteine 371 is the Nucleophile of the active site.

The protein belongs to the succinylarginine dihydrolase family. As to quaternary structure, homodimer.

The enzyme catalyses N(2)-succinyl-L-arginine + 2 H2O + 2 H(+) = N(2)-succinyl-L-ornithine + 2 NH4(+) + CO2. The protein operates within amino-acid degradation; L-arginine degradation via AST pathway; L-glutamate and succinate from L-arginine: step 2/5. Its function is as follows. Catalyzes the hydrolysis of N(2)-succinylarginine into N(2)-succinylornithine, ammonia and CO(2). This Pseudomonas fluorescens (strain ATCC BAA-477 / NRRL B-23932 / Pf-5) protein is N-succinylarginine dihydrolase.